Here is a 1215-residue protein sequence, read N- to C-terminus: Zinc finger SWIM domain-containing protein 6 (1215 aa).

Disordered regions lie at residues 1–46 (MAER…RPGP) and 133–161 (AAGG…SPAA). Gly residues-rich tracts occupy residues 18 to 38 (PGGG…GGGY) and 133 to 155 (AAGG…GGGS). The SWIM-type zinc finger occupies 246–283 (CNVAISFDRCKITSVTCSCGNKDIFYCAHVVALSLYRI).

In terms of biological role, involved in nervous system development, important for striatal morphology and motor regulation. This chain is Zinc finger SWIM domain-containing protein 6, found in Homo sapiens (Human).